The following is a 350-amino-acid chain: Ion-translocating oxidoreductase complex subunit D (350 aa).

The next 5 helical transmembrane spans lie at 20–40 (VMVLVILCLIPGVFLQSYFFG), 44–64 (LIQISLACLAALASEAFILKI), 68–88 (PVLNTLKDASALLTAILLAIS), 89–109 (IPPLAPWWIVVIGTIFAIIFV), and 125–145 (MAGYVLLLISFPVQMTSWLPV). Thr187 carries the post-translational modification FMN phosphoryl threonine. A run of 5 helical transmembrane segments spans residues 215 to 235 (SWQQIYWINGAFLAGGLILLF), 241 to 261 (WHIPMSFLLGIGIFSFIAFAY), 267 to 287 (APPLFHLFSGATMLGAFFILS), 300 to 320 (ILYALLIAFIVVIIRNVGGYP), and 322 to 342 (AVAFAVLLGNMCVPLIDYYTQ).

Belongs to the NqrB/RnfD family. The complex is composed of six subunits: RnfA, RnfB, RnfC, RnfD, RnfE and RnfG. It depends on FMN as a cofactor.

It is found in the cell inner membrane. Its function is as follows. Part of a membrane-bound complex that couples electron transfer with translocation of ions across the membrane. This chain is Ion-translocating oxidoreductase complex subunit D, found in Psychromonas ingrahamii (strain DSM 17664 / CCUG 51855 / 37).